A 347-amino-acid polypeptide reads, in one-letter code: Trace amine-associated receptor 4 (347 aa).

Topologically, residues Met-1–Tyr-37 are extracellular. Asn-20 is a glycosylation site (N-linked (GlcNAc...) asparagine). Cystine bridges form between Cys-23/Cys-187 and Cys-106/Cys-191. The chain crosses the membrane as a helical span at residues Leu-38–Ile-58. Residues Ala-59 to Asn-69 are Cytoplasmic-facing. The chain crosses the membrane as a helical span at residues Phe-70–Ser-90. Residues Met-91–Ser-110 are Extracellular-facing. A helical membrane pass occupies residues Cys-111 to Val-129. Residues Asp-130 to Val-149 lie on the Cytoplasmic side of the membrane. The helical transmembrane segment at Val-150 to Phe-170 threads the bilayer. The Extracellular segment spans residues Ser-171–Lys-197. Positions Leu-175–Thr-188 are extracellular Loop 2 (ECL2). Residues Leu-198–Ile-218 traverse the membrane as a helical segment. Over Tyr-219–Lys-260 the chain is Cytoplasmic. The chain crosses the membrane as a helical span at residues Thr-261 to Ile-281. At Thr-282–Asn-296 the chain is on the extracellular side. A helical membrane pass occupies residues Val-297–Tyr-317. The Cytoplasmic segment spans residues Pro-318–Pro-347.

It belongs to the G-protein coupled receptor 1 family. As to expression, specifically expressed in neurons of the olfactory epithelium, to discrete glomeruli predominantly localized to a confined bulb region. Present in the dorsal area of the main olfactory epithelium.

Its subcellular location is the cell membrane. Its function is as follows. Olfactory receptor specific for 2-phenylethylamine, a trace amine present at high concentration in the urine of carnivore species, playing a key role in fear and avoidance responses. 2-phenylethylamine acts as a kairomone in the chemical detection of carnivore odor and triggers fear in mice. This receptor is probably mediated by the G(s)-class of G-proteins which activate adenylate cyclase. The protein is Trace amine-associated receptor 4 of Mus musculus (Mouse).